Reading from the N-terminus, the 268-residue chain is uncharacterized protein (268 aa).

Residues 21–61 form an RING-type; degenerate zinc finger; that stretch reads CVICLQKDGLRAQLSPCGHDQFDYSCICRWMDQSLTCPICK.

Its subcellular location is the mitochondrion. It is found in the nucleus. This is an uncharacterized protein from Schizosaccharomyces pombe (strain 972 / ATCC 24843) (Fission yeast).